Consider the following 379-residue polypeptide: Acyl-CoA dehydrogenase, short-chain specific (379 aa).

It belongs to the acyl-CoA dehydrogenase family. The cofactor is FAD.

The catalysed reaction is butanoyl-CoA + oxidized [electron-transfer flavoprotein] + H(+) = (2E)-butenoyl-CoA + reduced [electron-transfer flavoprotein]. It carries out the reaction a short-chain 2,3-saturated fatty acyl-CoA + oxidized [electron-transfer flavoprotein] + H(+) = a short-chain (2E)-enoyl-CoA + reduced [electron-transfer flavoprotein]. The protein operates within lipid metabolism; butanoate metabolism. The polypeptide is Acyl-CoA dehydrogenase, short-chain specific (bcd) (Clostridium acetobutylicum (strain ATCC 824 / DSM 792 / JCM 1419 / IAM 19013 / LMG 5710 / NBRC 13948 / NRRL B-527 / VKM B-1787 / 2291 / W)).